A 152-amino-acid chain; its full sequence is Large ribosomal subunit protein bL9 (152 aa).

Belongs to the bacterial ribosomal protein bL9 family.

Its function is as follows. Binds to the 23S rRNA. This chain is Large ribosomal subunit protein bL9, found in Coxiella burnetii (strain RSA 331 / Henzerling II).